The chain runs to 486 residues: Ribosomal RNA small subunit methyltransferase F (486 aa).

Residues 122–128, glutamate 146, aspartate 173, and aspartate 191 contribute to the S-adenosyl-L-methionine site; that span reads ASAPGSK. Cysteine 244 acts as the Nucleophile in catalysis.

Belongs to the class I-like SAM-binding methyltransferase superfamily. RsmB/NOP family.

It is found in the cytoplasm. It catalyses the reaction cytidine(1407) in 16S rRNA + S-adenosyl-L-methionine = 5-methylcytidine(1407) in 16S rRNA + S-adenosyl-L-homocysteine + H(+). Specifically methylates the cytosine at position 1407 (m5C1407) of 16S rRNA. The polypeptide is Ribosomal RNA small subunit methyltransferase F (Shewanella loihica (strain ATCC BAA-1088 / PV-4)).